The primary structure comprises 365 residues: 3-dehydroquinate synthase (365 aa).

NAD(+)-binding positions include 106 to 110 (GVIGD), 130 to 131 (TT), lysine 142, lysine 151, and 169 to 172 (FFAT). 3 residues coordinate Zn(2+): glutamate 184, histidine 247, and histidine 264.

The protein belongs to the sugar phosphate cyclases superfamily. Dehydroquinate synthase family. The cofactor is Co(2+). It depends on Zn(2+) as a cofactor. Requires NAD(+) as cofactor.

It is found in the cytoplasm. It carries out the reaction 7-phospho-2-dehydro-3-deoxy-D-arabino-heptonate = 3-dehydroquinate + phosphate. Its pathway is metabolic intermediate biosynthesis; chorismate biosynthesis; chorismate from D-erythrose 4-phosphate and phosphoenolpyruvate: step 2/7. In terms of biological role, catalyzes the conversion of 3-deoxy-D-arabino-heptulosonate 7-phosphate (DAHP) to dehydroquinate (DHQ). This Listeria welshimeri serovar 6b (strain ATCC 35897 / DSM 20650 / CCUG 15529 / CIP 8149 / NCTC 11857 / SLCC 5334 / V8) protein is 3-dehydroquinate synthase.